Here is a 1225-residue protein sequence, read N- to C-terminus: Clustered mitochondria protein homolog (1225 aa).

Residues 1–22 (MAQTNGEMEHSKESPEQITNGN) are disordered. A Clu domain is found at 281–532 (QESNNQKDLL…RVTPLDVAWN (252 aa)). Disordered stretches follow at residues 577–605 (EEAA…EALD) and 846–878 (ANGV…SAAA). TPR repeat units follow at residues 949 to 982 (AKLY…TERT), 991 to 1024 (ILSY…WKII), and 1033 to 1066 (ITTM…CESL). Residues 1153-1184 (RTTLGTQIQPQVGQSTADVSAPSQASNSSIDS) show a composition bias toward polar residues. The tract at residues 1153–1225 (RTTLGTQIQP…KLRGSKKSSA (73 aa)) is disordered.

The protein belongs to the CLU family. As to quaternary structure, may associate with the eukaryotic translation initiation factor 3 (eIF-3) complex.

It localises to the cytoplasm. In terms of biological role, mRNA-binding protein involved in proper cytoplasmic distribution of mitochondria. The polypeptide is Clustered mitochondria protein homolog (Emericella nidulans (strain FGSC A4 / ATCC 38163 / CBS 112.46 / NRRL 194 / M139) (Aspergillus nidulans)).